Consider the following 347-residue polypeptide: Protein-glutamate methylesterase/protein-glutamine glutaminase (347 aa).

The region spanning 6 to 123 (RVLVVDDSPT…HRPFGDLAEK (118 aa)) is the Response regulatory domain. Position 57 is a 4-aspartylphosphate (aspartate 57). The CheB-type methylesterase domain maps to 150-342 (FRVGRKIVAI…EEILKLTAAR (193 aa)). Residues serine 162, histidine 188, and aspartate 284 contribute to the active site.

This sequence belongs to the CheB family. Phosphorylated by CheA. Phosphorylation of the N-terminal regulatory domain activates the methylesterase activity.

It is found in the cytoplasm. It catalyses the reaction [protein]-L-glutamate 5-O-methyl ester + H2O = L-glutamyl-[protein] + methanol + H(+). It carries out the reaction L-glutaminyl-[protein] + H2O = L-glutamyl-[protein] + NH4(+). Its function is as follows. Involved in chemotaxis. Part of a chemotaxis signal transduction system that modulates chemotaxis in response to various stimuli. Catalyzes the demethylation of specific methylglutamate residues introduced into the chemoreceptors (methyl-accepting chemotaxis proteins or MCP) by CheR. Also mediates the irreversible deamidation of specific glutamine residues to glutamic acid. The sequence is that of Protein-glutamate methylesterase/protein-glutamine glutaminase from Rhizobium etli (strain ATCC 51251 / DSM 11541 / JCM 21823 / NBRC 15573 / CFN 42).